Here is a 189-residue protein sequence, read N- to C-terminus: HGPRTase-like protein (189 aa).

It belongs to the purine/pyrimidine phosphoribosyltransferase family. Archaeal HPRT subfamily.

Functionally, may catalyze a purine salvage reaction, the substrate is unknown. This chain is HGPRTase-like protein, found in Natronomonas pharaonis (strain ATCC 35678 / DSM 2160 / CIP 103997 / JCM 8858 / NBRC 14720 / NCIMB 2260 / Gabara) (Halobacterium pharaonis).